The following is a 285-amino-acid chain: Bifunctional protein FolD (285 aa).

NADP(+) contacts are provided by residues 165–167 (GRS) and Ser190.

This sequence belongs to the tetrahydrofolate dehydrogenase/cyclohydrolase family. As to quaternary structure, homodimer.

It catalyses the reaction (6R)-5,10-methylene-5,6,7,8-tetrahydrofolate + NADP(+) = (6R)-5,10-methenyltetrahydrofolate + NADPH. It carries out the reaction (6R)-5,10-methenyltetrahydrofolate + H2O = (6R)-10-formyltetrahydrofolate + H(+). The protein operates within one-carbon metabolism; tetrahydrofolate interconversion. Catalyzes the oxidation of 5,10-methylenetetrahydrofolate to 5,10-methenyltetrahydrofolate and then the hydrolysis of 5,10-methenyltetrahydrofolate to 10-formyltetrahydrofolate. This is Bifunctional protein FolD from Burkholderia ambifaria (strain ATCC BAA-244 / DSM 16087 / CCUG 44356 / LMG 19182 / AMMD) (Burkholderia cepacia (strain AMMD)).